Here is a 418-residue protein sequence, read N- to C-terminus: UDP-N-acetylglucosamine 1-carboxyvinyltransferase (418 aa).

Lysine 22–asparagine 23 is a phosphoenolpyruvate binding site. Arginine 91 is a UDP-N-acetyl-alpha-D-glucosamine binding site. The active-site Proton donor is the cysteine 115. Cysteine 115 carries the 2-(S-cysteinyl)pyruvic acid O-phosphothioketal modification. UDP-N-acetyl-alpha-D-glucosamine is bound by residues arginine 120–leucine 124, aspartate 305, and isoleucine 327.

The protein belongs to the EPSP synthase family. MurA subfamily.

It localises to the cytoplasm. The enzyme catalyses phosphoenolpyruvate + UDP-N-acetyl-alpha-D-glucosamine = UDP-N-acetyl-3-O-(1-carboxyvinyl)-alpha-D-glucosamine + phosphate. The protein operates within cell wall biogenesis; peptidoglycan biosynthesis. Functionally, cell wall formation. Adds enolpyruvyl to UDP-N-acetylglucosamine. The chain is UDP-N-acetylglucosamine 1-carboxyvinyltransferase from Wigglesworthia glossinidia brevipalpis.